The primary structure comprises 585 residues: Butyrophilin subfamily 3 member A3 (585 aa).

Residues 1-29 form the signal peptide; it reads MKMASSLACLLLNFHVSVFLVQLLTPCSA. 2 consecutive Ig-like V-type domains span residues 30–139 and 145–236; these read QFSV…KALV and ALGS…ASIS. Residues 30–248 lie on the Extracellular side of the membrane; it reads QFSVLGPSGP…DPFFTSAQPW (219 aa). 2 disulfides stabilise this stretch: Cys52–Cys126 and Cys166–Cys220. Asn115 carries an N-linked (GlcNAc...) asparagine glycan. Residues 249 to 269 traverse the membrane as a helical segment; the sequence is IAALAGTLPISLLLLAGASYF. Over 270 to 585 the chain is Cytoplasmic; it reads LWRQQKEKIA…KPQACTEALY (316 aa). The B30.2/SPRY domain occupies 322-518; it reads RGEKSLAYHE…LTICPTPKEV (197 aa). Residues 560–585 form a disordered region; it reads AGAEGVSPSTTTSQNHKPQACTEALY. The span at 566-576 shows a compositional bias: polar residues; the sequence is SPSTTTSQNHK.

Belongs to the immunoglobulin superfamily. BTN/MOG family.

It is found in the membrane. This Pongo abelii (Sumatran orangutan) protein is Butyrophilin subfamily 3 member A3 (BTN3A3).